A 381-amino-acid polypeptide reads, in one-letter code: Chaperone protein DnaJ (381 aa).

The J domain maps to 5–69 (DYYEVLGVSK…EKRARYDRFG (65 aa)). Residues 136–218 (GKETEIEVPH…CGGTGHVKKR (83 aa)) form a CR-type zinc finger. Zn(2+) contacts are provided by cysteine 149, cysteine 152, cysteine 166, cysteine 169, cysteine 192, cysteine 195, cysteine 206, and cysteine 209. CXXCXGXG motif repeat units lie at residues 149–156 (CDTCHGSG), 166–173 (CPHCHGSG), 192–199 (CPVCGGTG), and 206–213 (CPTCGGTG). The segment at 154 to 174 (GSGAKPGTSPQSCPHCHGSGQ) is disordered.

The protein belongs to the DnaJ family. Homodimer. Zn(2+) serves as cofactor.

Its subcellular location is the cytoplasm. In terms of biological role, participates actively in the response to hyperosmotic and heat shock by preventing the aggregation of stress-denatured proteins and by disaggregating proteins, also in an autonomous, DnaK-independent fashion. Unfolded proteins bind initially to DnaJ; upon interaction with the DnaJ-bound protein, DnaK hydrolyzes its bound ATP, resulting in the formation of a stable complex. GrpE releases ADP from DnaK; ATP binding to DnaK triggers the release of the substrate protein, thus completing the reaction cycle. Several rounds of ATP-dependent interactions between DnaJ, DnaK and GrpE are required for fully efficient folding. Also involved, together with DnaK and GrpE, in the DNA replication of plasmids through activation of initiation proteins. This is Chaperone protein DnaJ from Geobacillus thermodenitrificans (strain NG80-2).